The following is a 423-amino-acid chain: Serine hydroxymethyltransferase (423 aa).

Residues leucine 120 and 124 to 126 (GHL) contribute to the (6S)-5,6,7,8-tetrahydrofolate site. Lysine 229 bears the N6-(pyridoxal phosphate)lysine mark. 353 to 355 (SPF) is a (6S)-5,6,7,8-tetrahydrofolate binding site.

It belongs to the SHMT family. As to quaternary structure, homodimer. It depends on pyridoxal 5'-phosphate as a cofactor.

It localises to the cytoplasm. It carries out the reaction (6R)-5,10-methylene-5,6,7,8-tetrahydrofolate + glycine + H2O = (6S)-5,6,7,8-tetrahydrofolate + L-serine. It participates in one-carbon metabolism; tetrahydrofolate interconversion. The protein operates within amino-acid biosynthesis; glycine biosynthesis; glycine from L-serine: step 1/1. In terms of biological role, catalyzes the reversible interconversion of serine and glycine with tetrahydrofolate (THF) serving as the one-carbon carrier. This reaction serves as the major source of one-carbon groups required for the biosynthesis of purines, thymidylate, methionine, and other important biomolecules. Also exhibits THF-independent aldolase activity toward beta-hydroxyamino acids, producing glycine and aldehydes, via a retro-aldol mechanism. The sequence is that of Serine hydroxymethyltransferase from Prochlorococcus marinus (strain MIT 9301).